Reading from the N-terminus, the 95-residue chain is MSYTDPDDSLPEHVPGEAEMSAQKEAILKQILEPQARMRLSNIRMVKPETAAALESHLINAASQGRLAGKISDEHLKQILQSMQKPRREFKINRR.

The tract at residues 1-21 (MSYTDPDDSLPEHVPGEAEMS) is disordered.

This sequence belongs to the PDCD5 family.

The polypeptide is DNA-binding protein CENSYa_1764 (Cenarchaeum symbiosum (strain A)).